An 85-amino-acid chain; its full sequence is Kappa-theraphotoxin-Gr1a (85 aa).

Residues 1–21 form the signal peptide; sequence MKTSVFAAILGLALFAVLCSG. Positions 22-49 are excised as a propeptide; it reads SELQEKDLKETLLSAIMETALEAQPEER. 3 disulfide bridges follow: Cys-51-Cys-65, Cys-58-Cys-70, and Cys-64-Cys-77. Residues 53–55 are involved in active face; the sequence is YLF.

Belongs to the neurotoxin 10 (Hwtx-1) family. 09 (HaTx) subfamily. Expressed by the venom gland.

It is found in the secreted. Inhibits Kv2.1/KCNB1 and Kv4.2/KCND2 voltage-gated potassium channels. Acts as a gating modifier by shifting channel openings to more depolarized voltages and acts via the occupancy of multiple binding sites on the channel. The toxin binding sites are situated on the S3-S4 extracellular linker of the channel. At least two hanatoxin molecules can occupy the Kv2.1/KCNB1 channel, and maybe more (three or four). Can also inhibit calcium channels (Cav2.1/CACNA1A). Needs to partition into the membrane in order to bind to the channel. The chain is Kappa-theraphotoxin-Gr1a from Grammostola rosea (Chilean rose tarantula).